Reading from the N-terminus, the 956-residue chain is Zinc finger CCHC domain-containing protein 14 (956 aa).

Disordered stretches follow at residues 25 to 50 (SSLN…PSGA), 78 to 99 (ALHT…GKHG), 206 to 229 (SSSS…KVGA), 243 to 276 (GIPS…GTGS), 361 to 464 (KEKS…EKEK), 485 to 505 (PVQN…PQLM), 543 to 583 (LEER…QGLS), and 750 to 786 (FYSG…PQPA). The span at 29 to 43 (SGGGGGGGGGGGGKS) shows a compositional bias: gly residues. Composition is skewed to low complexity over residues 206–225 (SSSS…PSLP) and 246–265 (SSQS…SASL). Residues 369 to 389 (LNSSAPSLVTSSGVARVTPTS) are compositionally biased toward polar residues. A compositionally biased stretch (low complexity) spans 423–432 (SSEYSSSSSS). A compositionally biased stretch (basic and acidic residues) spans 438 to 464 (VREESSDSAEESDRRVDIHVEGTEKEK). The span at 750-768 (FYSGGAGSSSPGNIPASSQ) shows a compositional bias: low complexity. A CCHC-type zinc finger spans residues 913-930 (LSCYNCGATGHRAQDCKQ).

This is Zinc finger CCHC domain-containing protein 14 (Zcchc14) from Mus musculus (Mouse).